A 135-amino-acid polypeptide reads, in one-letter code: Small ribosomal subunit protein uS9 (135 aa).

Over residues 108–118 the composition is skewed to basic and acidic residues; the sequence is VGDSRRTEPHK. The segment at 108–135 is disordered; it reads VGDSRRTEPHKPNRSTKGPRAKRQKSYR. Over residues 119-135 the composition is skewed to basic residues; it reads PNRSTKGPRAKRQKSYR.

Belongs to the universal ribosomal protein uS9 family. Part of the 30S ribosomal subunit.

In Thermococcus kodakarensis (strain ATCC BAA-918 / JCM 12380 / KOD1) (Pyrococcus kodakaraensis (strain KOD1)), this protein is Small ribosomal subunit protein uS9.